A 198-amino-acid chain; its full sequence is uncharacterized protein (198 aa).

A disordered region spans residues 40 to 111; that stretch reads GSALPPQAPT…LSRGAGQGAP (72 aa). Residues 60 to 74 are compositionally biased toward low complexity; it reads SSRTPGPRPPRSTLR.

This is an uncharacterized protein from Homo sapiens (Human).